A 64-amino-acid polypeptide reads, in one-letter code: Lingual antimicrobial peptide (64 aa).

An N-terminal signal peptide occupies residues 1–24 (MRLHHLLLALLFLVLSAGSGFTQG). Intrachain disulfides connect cysteine 31–cysteine 60, cysteine 38–cysteine 53, and cysteine 43–cysteine 61.

It belongs to the beta-defensin family. LAP/TAP subfamily. In many of the exposed epithelial surfaces including conjunctivae, bronchi, colon, urinary tract and trachea.

It is found in the secreted. Its function is as follows. Shows a broad spectrum of antibacterial and antifungal activities. The polypeptide is Lingual antimicrobial peptide (LAP) (Bos taurus (Bovine)).